We begin with the raw amino-acid sequence, 337 residues long: Ribosomal RNA small subunit methyltransferase C (337 aa).

The protein belongs to the methyltransferase superfamily. RsmC family. Monomer.

It is found in the cytoplasm. The catalysed reaction is guanosine(1207) in 16S rRNA + S-adenosyl-L-methionine = N(2)-methylguanosine(1207) in 16S rRNA + S-adenosyl-L-homocysteine + H(+). Functionally, specifically methylates the guanine in position 1207 of 16S rRNA in the 30S particle. The polypeptide is Ribosomal RNA small subunit methyltransferase C (Acinetobacter baumannii (strain ATCC 17978 / DSM 105126 / CIP 53.77 / LMG 1025 / NCDC KC755 / 5377)).